Reading from the N-terminus, the 201-residue chain is Nuclear protein UL4 (201 aa).

The protein belongs to the alphaherpesvirinae HHV-1 UL4 family.

The protein resides in the host nucleus. The sequence is that of Nuclear protein UL4 from Human herpesvirus 2 (strain HG52) (HHV-2).